We begin with the raw amino-acid sequence, 318 residues long: NADH-ubiquinone oxidoreductase chain 1 (318 aa).

8 helical membrane-spanning segments follow: residues 2–22 (FTIN…FLTL), 70–90 (MFII…IPLP), 100–120 (LGVL…LWSG), 146–166 (LAII…STLI), 171–191 (HLWL…STLA), 222–242 (LFFM…TILF), 254–276 (LYTI…IRAS), and 294–314 (LPLT…TSSI).

Belongs to the complex I subunit 1 family. Core subunit of respiratory chain NADH dehydrogenase (Complex I) which is composed of 45 different subunits.

It is found in the mitochondrion inner membrane. It carries out the reaction a ubiquinone + NADH + 5 H(+)(in) = a ubiquinol + NAD(+) + 4 H(+)(out). In terms of biological role, core subunit of the mitochondrial membrane respiratory chain NADH dehydrogenase (Complex I) which catalyzes electron transfer from NADH through the respiratory chain, using ubiquinone as an electron acceptor. Essential for the catalytic activity and assembly of complex I. The polypeptide is NADH-ubiquinone oxidoreductase chain 1 (MT-ND1) (Ceratotherium simum (White rhinoceros)).